The sequence spans 368 residues: Phosphoserine aminotransferase (368 aa).

Arginine 44 is a binding site for L-glutamate. Pyridoxal 5'-phosphate contacts are provided by residues 78 to 79 (AT), tryptophan 104, threonine 157, aspartate 179, and glutamine 202. At lysine 203 the chain carries N6-(pyridoxal phosphate)lysine. 244-245 (NT) lines the pyridoxal 5'-phosphate pocket.

This sequence belongs to the class-V pyridoxal-phosphate-dependent aminotransferase family. SerC subfamily. Homodimer. Requires pyridoxal 5'-phosphate as cofactor.

It is found in the cytoplasm. It carries out the reaction O-phospho-L-serine + 2-oxoglutarate = 3-phosphooxypyruvate + L-glutamate. The catalysed reaction is 4-(phosphooxy)-L-threonine + 2-oxoglutarate = (R)-3-hydroxy-2-oxo-4-phosphooxybutanoate + L-glutamate. Its pathway is amino-acid biosynthesis; L-serine biosynthesis; L-serine from 3-phospho-D-glycerate: step 2/3. It functions in the pathway cofactor biosynthesis; pyridoxine 5'-phosphate biosynthesis; pyridoxine 5'-phosphate from D-erythrose 4-phosphate: step 3/5. Functionally, catalyzes the reversible conversion of 3-phosphohydroxypyruvate to phosphoserine and of 3-hydroxy-2-oxo-4-phosphonooxybutanoate to phosphohydroxythreonine. This Neisseria meningitidis serogroup C / serotype 2a (strain ATCC 700532 / DSM 15464 / FAM18) protein is Phosphoserine aminotransferase.